The following is a 101-amino-acid chain: Cilia- and flagella-associated protein 141 (101 aa).

Microtubule inner protein component of sperm flagellar doublet microtubules.

Its subcellular location is the cytoplasm. The protein localises to the cytoskeleton. It localises to the cilium axoneme. The protein resides in the flagellum axoneme. In terms of biological role, microtubule inner protein (MIP) part of the dynein-decorated doublet microtubules (DMTs) in cilia axoneme, which is required for motile cilia beating. This is Cilia- and flagella-associated protein 141 from Mus musculus (Mouse).